A 214-amino-acid polypeptide reads, in one-letter code: Thymidylate kinase (214 aa).

10–17 (GPDGAGKT) is an ATP binding site.

Belongs to the thymidylate kinase family.

The catalysed reaction is dTMP + ATP = dTDP + ADP. Its function is as follows. Phosphorylation of dTMP to form dTDP in both de novo and salvage pathways of dTTP synthesis. The sequence is that of Thymidylate kinase from Levilactobacillus brevis (strain ATCC 367 / BCRC 12310 / CIP 105137 / JCM 1170 / LMG 11437 / NCIMB 947 / NCTC 947) (Lactobacillus brevis).